We begin with the raw amino-acid sequence, 76 residues long: Acyl carrier protein (76 aa).

Positions 1 to 76 constitute a Carrier domain; it reads MSIEERVKKI…SAIDYVQNNQ (76 aa). Residue serine 36 is modified to O-(pantetheine 4'-phosphoryl)serine.

Belongs to the acyl carrier protein (ACP) family. Post-translationally, 4'-phosphopantetheine is transferred from CoA to a specific serine of apo-ACP by AcpS. This modification is essential for activity because fatty acids are bound in thioester linkage to the sulfhydryl of the prosthetic group.

The protein resides in the cytoplasm. The protein operates within lipid metabolism; fatty acid biosynthesis. Carrier of the growing fatty acid chain in fatty acid biosynthesis. In Mannheimia succiniciproducens (strain KCTC 0769BP / MBEL55E), this protein is Acyl carrier protein.